A 228-amino-acid polypeptide reads, in one-letter code: DNA mismatch repair protein MutH (228 aa).

This sequence belongs to the MutH family.

The protein resides in the cytoplasm. Sequence-specific endonuclease that cleaves unmethylated GATC sequences. It is involved in DNA mismatch repair. The polypeptide is DNA mismatch repair protein MutH (Yersinia pseudotuberculosis serotype IB (strain PB1/+)).